The chain runs to 142 residues: Small ribosomal subunit protein bS16 (142 aa).

Residues 101-142 (RPSFDALGGDDAGKGEAITQKKKAEKKDEAAAESSSSESTEA) form a disordered region. Over residues 132–142 (AESSSSESTEA) the composition is skewed to low complexity.

This sequence belongs to the bacterial ribosomal protein bS16 family.

This is Small ribosomal subunit protein bS16 from Streptomyces avermitilis (strain ATCC 31267 / DSM 46492 / JCM 5070 / NBRC 14893 / NCIMB 12804 / NRRL 8165 / MA-4680).